A 366-amino-acid chain; its full sequence is Phospho-N-acetylmuramoyl-pentapeptide-transferase (366 aa).

Helical transmembrane passes span 27 to 47 (GAAI…ISLL), 76 to 96 (PTMG…IWVI), 101 to 121 (FFWL…WDDF), 136 to 156 (IKLL…LADP), 176 to 196 (IDIG…SSNA), 205 to 225 (GLAA…SYIS), 241 to 261 (GAGE…GFLW), 264 to 284 (CYPA…SALG), 285 to 305 (VVAI…IFVI), and 343 to 363 (AVTV…LSSL).

It belongs to the glycosyltransferase 4 family. MraY subfamily. It depends on Mg(2+) as a cofactor.

Its subcellular location is the cell inner membrane. It catalyses the reaction UDP-N-acetyl-alpha-D-muramoyl-L-alanyl-gamma-D-glutamyl-meso-2,6-diaminopimeloyl-D-alanyl-D-alanine + di-trans,octa-cis-undecaprenyl phosphate = di-trans,octa-cis-undecaprenyl diphospho-N-acetyl-alpha-D-muramoyl-L-alanyl-D-glutamyl-meso-2,6-diaminopimeloyl-D-alanyl-D-alanine + UMP. Its pathway is cell wall biogenesis; peptidoglycan biosynthesis. Catalyzes the initial step of the lipid cycle reactions in the biosynthesis of the cell wall peptidoglycan: transfers peptidoglycan precursor phospho-MurNAc-pentapeptide from UDP-MurNAc-pentapeptide onto the lipid carrier undecaprenyl phosphate, yielding undecaprenyl-pyrophosphoryl-MurNAc-pentapeptide, known as lipid I. The sequence is that of Phospho-N-acetylmuramoyl-pentapeptide-transferase from Methylacidiphilum infernorum (isolate V4) (Methylokorus infernorum (strain V4)).